The chain runs to 1416 residues: DNA-directed RNA polymerase subunit beta (1416 aa).

Belongs to the RNA polymerase beta chain family. In terms of assembly, in plastids the minimal PEP RNA polymerase catalytic core is composed of four subunits: alpha, beta, beta', and beta''. When a (nuclear-encoded) sigma factor is associated with the core the holoenzyme is formed, which can initiate transcription.

The protein resides in the plastid. It is found in the chloroplast. It catalyses the reaction RNA(n) + a ribonucleoside 5'-triphosphate = RNA(n+1) + diphosphate. In terms of biological role, DNA-dependent RNA polymerase catalyzes the transcription of DNA into RNA using the four ribonucleoside triphosphates as substrates. This chain is DNA-directed RNA polymerase subunit beta, found in Oltmannsiellopsis viridis (Marine flagellate).